An 84-amino-acid chain; its full sequence is MNYSTLIAVASLLTAGTESKKDGYPVEGSCAFPCGYDNAYCDKLCKERKADSGYCYWVNILCYCYGLPDNAAIKGYGRCKPGKK.

An N-terminal signal peptide occupies residues Met1–Ser19. In terms of domain architecture, LCN-type CS-alpha/beta spans Lys21–Lys80. Intrachain disulfides connect Cys30-Cys79, Cys34-Cys55, Cys41-Cys62, and Cys45-Cys64. At Pro81 the chain carries Proline amide.

This sequence belongs to the long (4 C-C) scorpion toxin superfamily. Sodium channel inhibitor family. Alpha subfamily. In terms of tissue distribution, expressed by the venom gland.

It localises to the secreted. Alpha toxins bind voltage-independently at site-3 of sodium channels (Nav) and inhibit the inactivation of the activated channels, thereby blocking neuronal transmission. The polypeptide is Toxin To10 (Tityus obscurus (Amazonian scorpion)).